Consider the following 355-residue polypeptide: Probable L-aspartate decarboxylase (355 aa).

The residue at position 210 (Lys210) is an N6-(pyridoxal phosphate)lysine.

Belongs to the group II decarboxylase family. MfnA subfamily. Pyridoxal 5'-phosphate is required as a cofactor.

The enzyme catalyses L-aspartate + H(+) = beta-alanine + CO2. The protein operates within cofactor biosynthesis; coenzyme A biosynthesis. In terms of biological role, catalyzes the decarboxylation of L-aspartate to produce beta-alanine. The protein is Probable L-aspartate decarboxylase of Halobacterium salinarum (strain ATCC 29341 / DSM 671 / R1).